The primary structure comprises 374 residues: Mannitol-1-phosphate 5-dehydrogenase (374 aa).

An NAD(+)-binding site is contributed by 3–14; that stretch reads AVHFGAGNIGRG.

It belongs to the mannitol dehydrogenase family.

The catalysed reaction is D-mannitol 1-phosphate + NAD(+) = beta-D-fructose 6-phosphate + NADH + H(+). The chain is Mannitol-1-phosphate 5-dehydrogenase from Shouchella clausii (strain KSM-K16) (Alkalihalobacillus clausii).